The primary structure comprises 359 residues: Peptide chain release factor 1 (359 aa).

At glutamine 236 the chain carries N5-methylglutamine.

The protein belongs to the prokaryotic/mitochondrial release factor family. Post-translationally, methylated by PrmC. Methylation increases the termination efficiency of RF1.

It localises to the cytoplasm. Its function is as follows. Peptide chain release factor 1 directs the termination of translation in response to the peptide chain termination codons UAG and UAA. The sequence is that of Peptide chain release factor 1 from Lacticaseibacillus casei (strain BL23) (Lactobacillus casei).